A 400-amino-acid polypeptide reads, in one-letter code: Acetate kinase (400 aa).

Residue asparagine 10 participates in Mg(2+) binding. ATP is bound at residue lysine 17. Arginine 91 contacts substrate. Aspartate 148 acts as the Proton donor/acceptor in catalysis. ATP-binding positions include histidine 208 to glycine 212, aspartate 283 to arginine 285, and glycine 331 to asparagine 335. Glutamate 385 provides a ligand contact to Mg(2+).

Belongs to the acetokinase family. Homodimer. Mg(2+) is required as a cofactor. Mn(2+) serves as cofactor.

It is found in the cytoplasm. The enzyme catalyses acetate + ATP = acetyl phosphate + ADP. It participates in metabolic intermediate biosynthesis; acetyl-CoA biosynthesis; acetyl-CoA from acetate: step 1/2. Its function is as follows. Catalyzes the formation of acetyl phosphate from acetate and ATP. Can also catalyze the reverse reaction. In Shewanella frigidimarina (strain NCIMB 400), this protein is Acetate kinase.